A 263-amino-acid polypeptide reads, in one-letter code: Putative replication protein PDa0002 (263 aa).

The chain is Putative replication protein PDa0002 from Xylella fastidiosa (strain Temecula1 / ATCC 700964).